We begin with the raw amino-acid sequence, 255 residues long: tRNA (guanine-N(1)-)-methyltransferase (255 aa).

Residues Gly113 and 133–138 each bind S-adenosyl-L-methionine; that span reads IGDYVL.

Belongs to the RNA methyltransferase TrmD family. In terms of assembly, homodimer.

The protein localises to the cytoplasm. It catalyses the reaction guanosine(37) in tRNA + S-adenosyl-L-methionine = N(1)-methylguanosine(37) in tRNA + S-adenosyl-L-homocysteine + H(+). Its function is as follows. Specifically methylates guanosine-37 in various tRNAs. The protein is tRNA (guanine-N(1)-)-methyltransferase of Salmonella agona (strain SL483).